The following is a 207-amino-acid chain: Outer-membrane lipoprotein LolB (207 aa).

Positions 1 to 21 are cleaved as a signal peptide; sequence MPIRKVSLLRLIPLASLVLAA. Cys-22 is lipidated: N-palmitoyl cysteine. A lipid anchor (S-diacylglycerol cysteine) is attached at Cys-22.

This sequence belongs to the LolB family. In terms of assembly, monomer.

Its subcellular location is the cell outer membrane. Its function is as follows. Plays a critical role in the incorporation of lipoproteins in the outer membrane after they are released by the LolA protein. In Serratia proteamaculans (strain 568), this protein is Outer-membrane lipoprotein LolB.